The primary structure comprises 483 residues: Putative inorganic phosphate cotransporter (483 aa).

7 helical membrane-spanning segments follow: residues 64–84 (YILS…GILA), 90–110 (LRFL…VPVA), 187–207 (IFYV…IFVY), 292–312 (LPYL…DWMI), 349–369 (ALTL…YSGF), 383–403 (FLMS…PIAA), and 420–440 (IVFF…NIFG). Residues 447-483 (WDNPSEDEQKPALESSSTTNPPRLSNGSSAPRAISSS) are disordered. The segment covering 460–483 (ESSSTTNPPRLSNGSSAPRAISSS) has biased composition (polar residues).

Belongs to the major facilitator superfamily. Sodium/anion cotransporter family.

Its subcellular location is the membrane. Functionally, may be an inorganic phosphate cotransporter. In Drosophila ananassae (Fruit fly), this protein is Putative inorganic phosphate cotransporter (Picot).